We begin with the raw amino-acid sequence, 363 residues long: MTVTGIIAEFNPFHNGHKYLLDHAEGIKIVAMSGNFVQRGEPAIVDKWIRAQMALENGADLVVELPFFTAVQSADYFASGAVDVLSRLGIDSLTFGTEEVLDYQTIADVYSEKSEEMEAFVESLPSDLSYPQKTQKMWEKFAGVDFTGNTPNHILGLAYAKACAGKGITLNPIQRQGAGYHSLDKEVSFASATSLRLHKEDSDFVDKFMPNSKLFQTSPQVSWDNYFQLLVYQILTNPDLTSVFQVNEEIASRLKAAVREISSVEELVDKVATKRYTKARVRRILTYILVGAVDNSLPKSIHVLGFSQKGQFHLKSVKKSVDIVARIGRKPWDMLTQQADNVYQLGNPELCEQNFGRVPIRVK.

ATP-binding positions include 7-20 (IAEF…HKYL), Gly-96, Asn-152, and Arg-175.

The protein belongs to the TmcAL family.

It localises to the cytoplasm. The enzyme catalyses cytidine(34) in elongator tRNA(Met) + acetate + ATP = N(4)-acetylcytidine(34) in elongator tRNA(Met) + AMP + diphosphate. Catalyzes the formation of N(4)-acetylcytidine (ac(4)C) at the wobble position of elongator tRNA(Met), using acetate and ATP as substrates. First activates an acetate ion to form acetyladenylate (Ac-AMP) and then transfers the acetyl group to tRNA to form ac(4)C34. The protein is tRNA(Met) cytidine acetate ligase of Streptococcus thermophilus (strain ATCC BAA-491 / LMD-9).